The chain runs to 74 residues: DNA-directed RNA polymerase subunit omega (74 aa).

It belongs to the RNA polymerase subunit omega family. In terms of assembly, the RNAP catalytic core consists of 2 alpha, 1 beta/beta' and 1 omega subunit. When a sigma factor is associated with the core the holoenzyme is formed, which can initiate transcription.

The catalysed reaction is RNA(n) + a ribonucleoside 5'-triphosphate = RNA(n+1) + diphosphate. Functionally, promotes RNA polymerase assembly. Latches the N- and C-terminal regions of the beta' subunit thereby facilitating its interaction with the beta and alpha subunits. The polypeptide is DNA-directed RNA polymerase subunit omega (Helicobacter hepaticus (strain ATCC 51449 / 3B1)).